A 124-amino-acid chain; its full sequence is Riboflavin kinase (124 aa).

10–15 (GLGKAA) contacts CDP. The Mg(2+) site is built by T39 and N41. FMN-binding residues include T93 and E101. 106 to 109 (DKLR) lines the CDP pocket.

This sequence belongs to the archaeal riboflavin kinase family. The cofactor is Mg(2+).

The catalysed reaction is riboflavin + CTP = CDP + FMN + H(+). It participates in cofactor biosynthesis; FMN biosynthesis; FMN from riboflavin (CTP route): step 1/1. Its function is as follows. Catalyzes the CTP-dependent phosphorylation of riboflavin (vitamin B2) to form flavin mononucleotide (FMN). The sequence is that of Riboflavin kinase from Methanobrevibacter smithii (strain ATCC 35061 / DSM 861 / OCM 144 / PS).